The sequence spans 452 residues: MAAATLLRATPLFSGLGAGPAPLLQGLLRPLKAQALPVLCRGLAVEAKKTYVRDKPHVNVGTIGHVDHGKTTLTAAITKILAEGGGAKFKKYEEIDNAPEERARGITINAAHVEYSTAARHYAHTDCPGHADYVKNMITGTAPLDGCILVVAANDGPMPQTREHLLLARQIGVEHVVVYVNKADAVQDSEMVELVELEIRELLTEFGYKGEETPIIVGSALCALEQRDPELGLKSVQKLLDAVDTYIPVPTRDLEKPFLLPVESVYSIPGRGTVVTGTLERGILKKGDECEFLGHSKNIRTVVTGIEMFHKSLDRAEAGDNLGALVRGLKREDLRRGLVMAKPGSIQPHQKVEAQVYILTKEEGGRHKPFVSHFMPVMFSLTWDMACRIILPPGKELAMPGEDLKLTLILRQPMILEKGQRFTLRDGNRTIGTGLVTDTPAMTEEDKNIKWS.

Residues 1-43 (MAAATLLRATPLFSGLGAGPAPLLQGLLRPLKAQALPVLCRGL) constitute a mitochondrion transit peptide. Positions 55–251 (KPHVNVGTIG…AVDTYIPVPT (197 aa)) constitute a tr-type G domain. The tract at residues 64 to 71 (GHVDHGKT) is G1. The GTP site is built by D67, G69, K70, T71, and T72. T71 is a binding site for Mg(2+). Residue K79 is modified to N6-acetyllysine. K88 carries the N6-acetyllysine; alternate modification. At K88 the chain carries N6-succinyllysine; alternate. A G2 region spans residues 105–109 (GITIN). The G3 stretch occupies residues 126–129 (DCPG). Residues N181, D184, S219, A220, and L221 each contribute to the GTP site. The interval 181–184 (NKAD) is G4. Positions 219–221 (SAL) are G5. K234 is modified (N6-succinyllysine). K256 is subject to N6-acetyllysine. The residue at position 278 (T278) is a Phosphothreonine. At K286 the chain carries N6-succinyllysine. S312 bears the Phosphoserine mark. N6-acetyllysine is present on residues K361 and K418.

Belongs to the TRAFAC class translation factor GTPase superfamily. Classic translation factor GTPase family. EF-Tu/EF-1A subfamily. As to quaternary structure, interacts with NLRX1. Interacts with ATG16L1.

Its subcellular location is the mitochondrion. It carries out the reaction GTP + H2O = GDP + phosphate + H(+). In terms of biological role, GTP hydrolase that promotes the GTP-dependent binding of aminoacyl-tRNA to the A-site of ribosomes during protein biosynthesis. Also plays a role in the regulation of autophagy and innate immunity. Recruits ATG5-ATG12 and NLRX1 at mitochondria and serves as a checkpoint of the RIGI-MAVS pathway. In turn, inhibits RLR-mediated type I interferon while promoting autophagy. The sequence is that of Elongation factor Tu, mitochondrial (TUFM) from Bos taurus (Bovine).